Reading from the N-terminus, the 109-residue chain is LSM2-LSM8 complex subunit LSM8 (109 aa).

A Sm domain is found at 1–70 (MSATLKDYLN…IALVGLIDAE (70 aa)).

Belongs to the snRNP Sm proteins family. Component of the heptameric LSM2-LSM8 complex that forms a seven-membered ring structure with a donut shape; an RNA strand can pass through the hole in the center of the ring structure. The LSm subunits are arranged in the order LSM8, LSM2, LSM3, LSM6, LSM5, LSM7 and LSM4. Component of the spliceosome U4/U6-U5 tri-snRNP complex composed of the U4, U6 and U5 snRNAs and at least PRP3, PRP4, PRP6, PRP8, PRP18, PRP31, PRP38, SNU13, SNU23, SNU66, SNU114, SPP381, SMB1, SMD1, SMD2, SMD3, SMX2, SMX3, LSM2, LSM3, LSM4, LSM5, LSM6, LSM7, LSM8, BRR2 and DIB1.

Its subcellular location is the nucleus. It is found in the cytoplasm. Its function is as follows. Component of the nuclear LSM2-LSM8 complex, which is involved in spliceosome assembly. The LSM2-LSM8 complex plays a role in the biogenesis of the spliceosomal U4/U6-U5 tri-snRNP complex by accelerating PRP24-mediated annealing of U4/U6 di-snRNA. The LSM2-LSM8 complex binds U6 snRNA terminating with a non-cyclic 3' phosphate group. LSM2-LSM8 is probably also involved in degradation of nuclear pre-mRNA by targeting them for decapping. LSM2-LSM8 could be involved in processing of pre-tRNAs, pre-rRNAs and U3 snoRNA, although involvement may be indirect. This is LSM2-LSM8 complex subunit LSM8 (LSM8) from Saccharomyces cerevisiae (strain ATCC 204508 / S288c) (Baker's yeast).